Consider the following 283-residue polypeptide: 4-diphosphocytidyl-2-C-methyl-D-erythritol kinase (283 aa).

K12 is an active-site residue. 94 to 104 contacts ATP; sequence PAQAGLGGGSS. D136 is an active-site residue.

This sequence belongs to the GHMP kinase family. IspE subfamily.

It catalyses the reaction 4-CDP-2-C-methyl-D-erythritol + ATP = 4-CDP-2-C-methyl-D-erythritol 2-phosphate + ADP + H(+). The protein operates within isoprenoid biosynthesis; isopentenyl diphosphate biosynthesis via DXP pathway; isopentenyl diphosphate from 1-deoxy-D-xylulose 5-phosphate: step 3/6. Catalyzes the phosphorylation of the position 2 hydroxy group of 4-diphosphocytidyl-2C-methyl-D-erythritol. The polypeptide is 4-diphosphocytidyl-2-C-methyl-D-erythritol kinase (Acidovorax sp. (strain JS42)).